The sequence spans 548 residues: Membrane protein insertase YidC (548 aa).

The chain crosses the membrane as a helical span at residues 6 to 26 (NLLVIALLFVSFMIWQAWEQD). Residues 28–55 (NPQPQAQQTTQTTTTAAGSAADQGVPAS) are disordered. The segment covering 30–50 (QPQAQQTTQTTTTAAGSAADQ) has biased composition (low complexity). Transmembrane regions (helical) follow at residues 350–370 (FVGNWGFSIIIITFIVRGIMY), 420–440 (LGGCFPLLIQMPIFLALYYML), 458–478 (LSAQDPYYILPILMGVTMFFI), and 499–519 (PVIFTVFFLWFPSGLVLYYIV).

Belongs to the OXA1/ALB3/YidC family. Type 1 subfamily. Interacts with the Sec translocase complex via SecD. Specifically interacts with transmembrane segments of nascent integral membrane proteins during membrane integration.

Its subcellular location is the cell inner membrane. Functionally, required for the insertion and/or proper folding and/or complex formation of integral membrane proteins into the membrane. Involved in integration of membrane proteins that insert both dependently and independently of the Sec translocase complex, as well as at least some lipoproteins. Aids folding of multispanning membrane proteins. This chain is Membrane protein insertase YidC, found in Escherichia coli (strain K12 / MC4100 / BW2952).